Reading from the N-terminus, the 682-residue chain is Potassium-transporting ATPase ATP-binding subunit (682 aa).

A run of 4 helical transmembrane segments spans residues 34–54 (PVMF…IAMA), 62–82 (ALFS…ANFA), 219–239 (IALT…TATL), and 254–274 (VLVA…LSAI). Asp307 acts as the 4-aspartylphosphate intermediate in catalysis. ATP is bound by residues Asp344, Glu348, 377 to 384 (FTAQSRMS), and Lys395. Residues Asp518 and Asp522 each contribute to the Mg(2+) site. 3 helical membrane-spanning segments follow: residues 588–608 (FAII…LNIM), 616–636 (AILS…PLAL), and 656–676 (IYGL…DLLL).

This sequence belongs to the cation transport ATPase (P-type) (TC 3.A.3) family. Type IA subfamily. The system is composed of three essential subunits: KdpA, KdpB and KdpC.

Its subcellular location is the cell inner membrane. It catalyses the reaction K(+)(out) + ATP + H2O = K(+)(in) + ADP + phosphate + H(+). Part of the high-affinity ATP-driven potassium transport (or Kdp) system, which catalyzes the hydrolysis of ATP coupled with the electrogenic transport of potassium into the cytoplasm. This subunit is responsible for energy coupling to the transport system and for the release of the potassium ions to the cytoplasm. In Escherichia coli O9:H4 (strain HS), this protein is Potassium-transporting ATPase ATP-binding subunit.